A 193-amino-acid chain; its full sequence is Probable nicotinate-nucleotide adenylyltransferase (193 aa).

This sequence belongs to the NadD family.

It catalyses the reaction nicotinate beta-D-ribonucleotide + ATP + H(+) = deamido-NAD(+) + diphosphate. The protein operates within cofactor biosynthesis; NAD(+) biosynthesis; deamido-NAD(+) from nicotinate D-ribonucleotide: step 1/1. Its function is as follows. Catalyzes the reversible adenylation of nicotinate mononucleotide (NaMN) to nicotinic acid adenine dinucleotide (NaAD). In Fusobacterium nucleatum subsp. nucleatum (strain ATCC 25586 / DSM 15643 / BCRC 10681 / CIP 101130 / JCM 8532 / KCTC 2640 / LMG 13131 / VPI 4355), this protein is Probable nicotinate-nucleotide adenylyltransferase.